Here is a 195-residue protein sequence, read N- to C-terminus: Chromophore lyase CpcT/CpeT 2 (195 aa).

It belongs to the CpcT/CpeT biliprotein lyase family.

Its function is as follows. Covalently attaches a chromophore to Cys residue(s) of phycobiliproteins. The chain is Chromophore lyase CpcT/CpeT 2 from Trichodesmium erythraeum (strain IMS101).